Consider the following 480-residue polypeptide: UDP-N-acetylmuramate--L-alanine ligase (480 aa).

An ATP-binding site is contributed by 127–133; it reads GTHGKTT.

Belongs to the MurCDEF family.

It is found in the cytoplasm. It carries out the reaction UDP-N-acetyl-alpha-D-muramate + L-alanine + ATP = UDP-N-acetyl-alpha-D-muramoyl-L-alanine + ADP + phosphate + H(+). It functions in the pathway cell wall biogenesis; peptidoglycan biosynthesis. Cell wall formation. This Blochmanniella floridana protein is UDP-N-acetylmuramate--L-alanine ligase.